The chain runs to 406 residues: Phosphopentomutase (406 aa).

6 residues coordinate Mn(2+): D10, D305, H310, D346, H347, and H358.

The protein belongs to the phosphopentomutase family. The cofactor is Mn(2+).

The protein localises to the cytoplasm. It catalyses the reaction 2-deoxy-alpha-D-ribose 1-phosphate = 2-deoxy-D-ribose 5-phosphate. It carries out the reaction alpha-D-ribose 1-phosphate = D-ribose 5-phosphate. It participates in carbohydrate degradation; 2-deoxy-D-ribose 1-phosphate degradation; D-glyceraldehyde 3-phosphate and acetaldehyde from 2-deoxy-alpha-D-ribose 1-phosphate: step 1/2. Isomerase that catalyzes the conversion of deoxy-ribose 1-phosphate (dRib-1-P) and ribose 1-phosphate (Rib-1-P) to deoxy-ribose 5-phosphate (dRib-5-P) and ribose 5-phosphate (Rib-5-P), respectively. This is Phosphopentomutase from Rhizobium leguminosarum bv. trifolii (strain WSM2304).